The sequence spans 251 residues: MRRLVIAGNWKMYKNNKEAVETLTQLKDLTRDVKNVDIVIGAPFTCLSDAVKIVEGSNVKIAAENVYPKIEGAYTGEVSPKMLKDIGVTYVILGHSERREYFKESDEFINQKVKAVLEIGMKPILCIGEKLEDREGGKTLEVLAKQIKEGLVDLSKEDAEKTIVAYEPVWAIGTGKTATPEMAQETHKEIRNVLAEMFGKDVADKMIIQYGGSMKPENAKDLLSQEDIDGGLVGGASLKADSFFEIIKAGN.

A substrate-binding site is contributed by 9 to 11 (NWK). Residue H95 is the Electrophile of the active site. E167 acts as the Proton acceptor in catalysis. Substrate contacts are provided by residues G173, S213, and 234-235 (GG).

Belongs to the triosephosphate isomerase family. Homodimer.

It localises to the cytoplasm. The catalysed reaction is D-glyceraldehyde 3-phosphate = dihydroxyacetone phosphate. The protein operates within carbohydrate biosynthesis; gluconeogenesis. It participates in carbohydrate degradation; glycolysis; D-glyceraldehyde 3-phosphate from glycerone phosphate: step 1/1. Its function is as follows. Involved in the gluconeogenesis. Catalyzes stereospecifically the conversion of dihydroxyacetone phosphate (DHAP) to D-glyceraldehyde-3-phosphate (G3P). This Fusobacterium nucleatum subsp. nucleatum (strain ATCC 25586 / DSM 15643 / BCRC 10681 / CIP 101130 / JCM 8532 / KCTC 2640 / LMG 13131 / VPI 4355) protein is Triosephosphate isomerase.